Here is a 427-residue protein sequence, read N- to C-terminus: Gamma-glutamyl phosphate reductase (427 aa).

Belongs to the gamma-glutamyl phosphate reductase family.

The protein resides in the cytoplasm. It carries out the reaction L-glutamate 5-semialdehyde + phosphate + NADP(+) = L-glutamyl 5-phosphate + NADPH + H(+). Its pathway is amino-acid biosynthesis; L-proline biosynthesis; L-glutamate 5-semialdehyde from L-glutamate: step 2/2. Its function is as follows. Catalyzes the NADPH-dependent reduction of L-glutamate 5-phosphate into L-glutamate 5-semialdehyde and phosphate. The product spontaneously undergoes cyclization to form 1-pyrroline-5-carboxylate. This is Gamma-glutamyl phosphate reductase from Rhizobium etli (strain ATCC 51251 / DSM 11541 / JCM 21823 / NBRC 15573 / CFN 42).